The chain runs to 38 residues: Bacteriocin BAC79 (38 aa).

Its activity is regulated as follows. The antimicrobial activity of BAC79 was completely lost after treatment with enzymes trypsin, pepsin, proteinase-K, and carboxypeptidase, while there was no loss of activity with either amylase or lipase. In terms of biological role, has antibacterial activity against a wide spectrum of Gram-positive and Gram-negative bacteria, including L.monocytogenes which is inhibited through disruption of the cell membrane. The chain is Bacteriocin BAC79 from Weissella confusa (Lactobacillus confusus).